The sequence spans 238 residues: uncharacterized protein (238 aa).

Residues 3 to 116 (RVIIVDDEQP…RLAKTLTRLS (114 aa)) form the Response regulatory domain. Aspartate 54 bears the 4-aspartylphosphate mark. In terms of domain architecture, HTH LytTR-type spans 136–237 (IPCSGHNRIF…LKSLKEKLGI (102 aa)).

This is an uncharacterized protein from Yersinia pestis.